A 321-amino-acid polypeptide reads, in one-letter code: Quinol oxidase subunit 2 (321 aa).

Residues methionine 1–glycine 25 form the signal peptide. Cysteine 26 carries N-palmitoyl cysteine lipidation. The S-diacylglycerol cysteine moiety is linked to residue cysteine 26. The next 2 helical transmembrane spans lie at serine 49–valine 69 and threonine 90–proline 110. The disordered stretch occupies residues glutamine 294–glutamate 321. Residues serine 300–glutamate 321 are compositionally biased toward basic and acidic residues.

This sequence belongs to the cytochrome c oxidase subunit 2 family.

It localises to the cell membrane. It carries out the reaction 2 a quinol + O2 = 2 a quinone + 2 H2O. Its function is as follows. Catalyzes quinol oxidation with the concomitant reduction of oxygen to water. Major component for energy conversion during vegetative growth. Subunit II transfers the electrons from a quinol to the binuclear center of the catalytic subunit I. This Bacillus spizizenii (strain ATCC 23059 / NRRL B-14472 / W23) (Bacillus subtilis subsp. spizizenii) protein is Quinol oxidase subunit 2 (qoxA).